The following is a 340-amino-acid chain: Replication initiation protein (340 aa).

Residues 38 to 58 (PERKRTKRRRGEHSTKPKCEN) form a disordered region.

In Escherichia coli, this protein is Replication initiation protein (repA1).